The chain runs to 207 residues: ATP-dependent Clp protease proteolytic subunit (207 aa).

S111 functions as the Nucleophile in the catalytic mechanism. H136 is a catalytic residue.

The protein belongs to the peptidase S14 family. Fourteen ClpP subunits assemble into 2 heptameric rings which stack back to back to give a disk-like structure with a central cavity, resembling the structure of eukaryotic proteasomes.

It is found in the cytoplasm. It carries out the reaction Hydrolysis of proteins to small peptides in the presence of ATP and magnesium. alpha-casein is the usual test substrate. In the absence of ATP, only oligopeptides shorter than five residues are hydrolyzed (such as succinyl-Leu-Tyr-|-NHMec, and Leu-Tyr-Leu-|-Tyr-Trp, in which cleavage of the -Tyr-|-Leu- and -Tyr-|-Trp bonds also occurs).. In terms of biological role, cleaves peptides in various proteins in a process that requires ATP hydrolysis. Has a chymotrypsin-like activity. Plays a major role in the degradation of misfolded proteins. The chain is ATP-dependent Clp protease proteolytic subunit from Burkholderia mallei (strain ATCC 23344).